The following is a 553-amino-acid chain: RNA N(6)-adenosine-methyltransferase METTL16 (553 aa).

The segment at 17-20 (PPDF) is RNA-binding. Residues arginine 82, glycine 110, serine 114, glutamate 133, threonine 164, and asparagine 184 each contribute to the S-adenosyl-L-methionine site. The tract at residues 163 to 167 (KTLLM) is K-loop. RNA-binding stretches follow at residues 199 to 211 (SRNS…SSVN), 250 to 254 (GKKCS), and 277 to 283 (QGRTMRW). A VCR 1 region spans residues 289–400 (FYDDVTVPSP…QLREVPRAPE (112 aa)). A phosphoserine mark is found at serine 329, serine 425, and serine 429. Residues 457 to 496 (EETPEATEDERDEERGGMEAMESCKGSSNGAQDGEASEKG) form a disordered region. Over residues 458-468 (ETPEATEDERD) the composition is skewed to acidic residues. Threonine 463 carries the phosphothreonine modification. Residues 506–553 (YLFKCLVNIKKEAGDAVVEMHWVEGQNRDLMNQLCTYVRNQILRLVAS) are VCR 2.

The protein belongs to the methyltransferase superfamily. METTL16/RlmF family. Interacts with MEPCE. Interacts with LARP7.

The protein localises to the nucleus. It localises to the cytoplasm. It carries out the reaction adenosine in U6 snRNA + S-adenosyl-L-methionine = N(6)-methyladenosine in U6 snRNA + S-adenosyl-L-homocysteine + H(+). It catalyses the reaction an adenosine in mRNA + S-adenosyl-L-methionine = an N(6)-methyladenosine in mRNA + S-adenosyl-L-homocysteine + H(+). Its activity is regulated as follows. Methyltransferase activity is autoinhibited by the K-loop region that blocks S-adenosyl-L-methionine-binding. Upon activation, K-loop changes conformation, allowing S-adenosyl-L-methionine-binding and subsequent methyltransferase activity. mRNA N6-adenosine-methyltransferase activity is inhibited by zinc. Functionally, RNA N6-methyltransferase that methylates adenosine residues at the N(6) position of a subset of RNAs and is involved in S-adenosyl-L-methionine homeostasis by regulating expression of MAT2A transcripts. Able to N6-methylate a subset of mRNAs and U6 small nuclear RNAs (U6 snRNAs). In contrast to the METTL3-METTL14 heterodimer, only able to methylate a limited number of RNAs: requires both a 5'UACAGAGAA-3' nonamer sequence and a specific RNA structure. Plays a key role in S-adenosyl-L-methionine homeostasis by mediating N6-methylation of MAT2A mRNAs, altering splicing of MAT2A transcripts: in presence of S-adenosyl-L-methionine, binds the 3'-UTR region of MAT2A mRNA and specifically N6-methylates the first hairpin of MAT2A mRNA, preventing recognition of their 3'-splice site by U2AF1/U2AF35, thereby inhibiting splicing and protein production of S-adenosylmethionine synthase. In S-adenosyl-L-methionine-limiting conditions, binds the 3'-UTR region of MAT2A mRNA but stalls due to the lack of a methyl donor, preventing N6-methylation and promoting expression of MAT2A. In addition to mRNAs, also able to mediate N6-methylation of U6 small nuclear RNA (U6 snRNA): specifically N6-methylates adenine in position 43 of U6 snRNAs. Also able to bind various lncRNAs, such as 7SK snRNA (7SK RNA) or 7SL RNA. Specifically binds the 3'-end of the MALAT1 long non-coding RNA. The polypeptide is RNA N(6)-adenosine-methyltransferase METTL16 (Mus musculus (Mouse)).